Here is a 512-residue protein sequence, read N- to C-terminus: ATP synthase subunit alpha 2 (512 aa).

169–176 (GDRQTGKT) serves as a coordination point for ATP.

The protein belongs to the ATPase alpha/beta chains family. In terms of assembly, F-type ATPases have 2 components, CF(1) - the catalytic core - and CF(0) - the membrane proton channel. CF(1) has five subunits: alpha(3), beta(3), gamma(1), delta(1), epsilon(1). CF(0) has four main subunits: a(1), b(1), b'(1) and c(9-12).

It localises to the cell inner membrane. It catalyses the reaction ATP + H2O + 4 H(+)(in) = ADP + phosphate + 5 H(+)(out). Produces ATP from ADP in the presence of a proton gradient across the membrane. The alpha chain is a regulatory subunit. This chain is ATP synthase subunit alpha 2, found in Dinoroseobacter shibae (strain DSM 16493 / NCIMB 14021 / DFL 12).